The following is an 892-amino-acid chain: DNA ligase (892 aa).

The disordered stretch occupies residues 1-23; sequence MTMTNRDDSEQLAWDFDAPESDG. Residues 99–103, 148–149, and Glu-182 contribute to the NAD(+) site; these read DAAYD and SL. Residue Lys-184 is the N6-AMP-lysine intermediate of the active site. 4 residues coordinate NAD(+): Arg-205, Glu-244, Lys-369, and Lys-393. Cys-490, Cys-493, Cys-509, and Cys-515 together coordinate Zn(2+). A BRCT domain is found at 810–892; it reads GLPQTLAGKT…KQLLDTGTVE (83 aa).

This sequence belongs to the NAD-dependent DNA ligase family. LigA subfamily. The cofactor is Mg(2+). Mn(2+) is required as a cofactor.

The catalysed reaction is NAD(+) + (deoxyribonucleotide)n-3'-hydroxyl + 5'-phospho-(deoxyribonucleotide)m = (deoxyribonucleotide)n+m + AMP + beta-nicotinamide D-nucleotide.. Its function is as follows. DNA ligase that catalyzes the formation of phosphodiester linkages between 5'-phosphoryl and 3'-hydroxyl groups in double-stranded DNA using NAD as a coenzyme and as the energy source for the reaction. It is essential for DNA replication and repair of damaged DNA. In Bifidobacterium adolescentis (strain ATCC 15703 / DSM 20083 / NCTC 11814 / E194a), this protein is DNA ligase.